The primary structure comprises 354 residues: Hyaluronan and proteoglycan link protein 1 (354 aa).

Positions 1-9 (MKSLLLLVL) are excised as a propeptide. 2 N-linked (GlcNAc...) asparagine glycosylation sites follow: asparagine 21 and asparagine 56. The region spanning 38–152 (PRLLVEAEQA…EGLEDDTAVV (115 aa)) is the Ig-like V-type domain. 5 cysteine pairs are disulfide-bonded: cysteine 61-cysteine 139, cysteine 181-cysteine 252, cysteine 205-cysteine 226, cysteine 279-cysteine 349, and cysteine 304-cysteine 325. 2 Link domains span residues 159-254 (VVFP…FCFT) and 259-351 (GRFY…YCFR).

It belongs to the HAPLN family.

Its subcellular location is the secreted. The protein resides in the extracellular space. The protein localises to the extracellular matrix. Functionally, stabilizes the aggregates of proteoglycan monomers with hyaluronic acid in the extracellular cartilage matrix. The sequence is that of Hyaluronan and proteoglycan link protein 1 (HAPLN1) from Sus scrofa (Pig).